We begin with the raw amino-acid sequence, 341 residues long: 4-hydroxy-2-oxovalerate aldolase (341 aa).

A Pyruvate carboxyltransferase domain is found at 9–260 (VVITDSTLRD…ATGIDLYRVL (252 aa)). Substrate is bound at residue 17–18 (RD). Position 18 (D18) interacts with Mn(2+). The Proton acceptor role is filled by H21. Positions 172 and 199 each coordinate substrate. Positions 199 and 201 each coordinate Mn(2+).

This sequence belongs to the 4-hydroxy-2-oxovalerate aldolase family.

The enzyme catalyses (S)-4-hydroxy-2-oxopentanoate = acetaldehyde + pyruvate. This is 4-hydroxy-2-oxovalerate aldolase from Spirochaeta aurantia.